The chain runs to 441 residues: Apolipoprotein N-acyltransferase (441 aa).

Transmembrane regions (helical) follow at residues 23-43 (IIFK…SIYL), 45-65 (FFEN…GLVL), 75-95 (YFWI…LSSI), 97-117 (FNLN…YGLL), 133-153 (GIFC…WGIF), 156-176 (YGFF…AYFI), and 178-198 (EGYI…FSGF). The CN hydrolase domain maps to 215–441 (INTNISQDQK…LSKEIFNDKK (227 aa)). Glutamate 256 functions as the Proton acceptor in the catalytic mechanism. Residue lysine 310 is part of the active site. Residue cysteine 359 is the Nucleophile of the active site.

The protein belongs to the CN hydrolase family. Apolipoprotein N-acyltransferase subfamily.

It is found in the cell inner membrane. The enzyme catalyses N-terminal S-1,2-diacyl-sn-glyceryl-L-cysteinyl-[lipoprotein] + a glycerophospholipid = N-acyl-S-1,2-diacyl-sn-glyceryl-L-cysteinyl-[lipoprotein] + a 2-acyl-sn-glycero-3-phospholipid + H(+). Its pathway is protein modification; lipoprotein biosynthesis (N-acyl transfer). Functionally, catalyzes the phospholipid dependent N-acylation of the N-terminal cysteine of apolipoprotein, the last step in lipoprotein maturation. The sequence is that of Apolipoprotein N-acyltransferase from Campylobacter jejuni subsp. jejuni serotype O:2 (strain ATCC 700819 / NCTC 11168).